The following is a 999-amino-acid chain: Desmoglein-3 (999 aa).

The signal sequence occupies residues 1–23; it reads MMGLFPRTTGALAIFVVVILVHG. The propeptide occupies 24-49; sequence ELRIETKGQYDEEEMTMQQAKRRQKR. Cadherin domains are found at residues 50-158, 159-268, 269-383, and 386-499; these read EWVK…PVFS, QQIF…PMFR, DSQY…GIAF, and ASKT…VLEK. Over 50–615 the chain is Extracellular; that stretch reads EWVKFAKPCR…TRYGRPHSGR (566 aa). Residues N110 and N180 are each glycosylated (N-linked (GlcNAc...) asparagine). N-linked (GlcNAc...) asparagine glycosylation is found at N459 and N545. A helical transmembrane segment spans residues 616–640; that stretch reads LGPAAIGLLLLGLLLLLLAPLLLLT. Over 641–999 the chain is Cytoplasmic; that stretch reads CDCGAGSTGG…CTEDPCSRLI (359 aa). A required for interaction with CTNND1 and localization at cell-cell junctions region spans residues 642-714; it reads DCGAGSTGGV…NTYARGTAVE (73 aa). Desmoglein repeat repeat units follow at residues 910–935 and 936–966; these read LSTSGSVQPAVSIPDPLQHGNYLVTE and TYSASGSLVQPSTAGFDPLLTQNVIVTERVI.

As to quaternary structure, homodimer. Part of a complex that contains DSG3, PKP1, YAP1 and YWHAG; the complex is required for localization of DSG3 and YAP1 to the cell membrane in keratinocytes. Interacts with PKP2. Interacts with CTNND1; the interaction facilitates DSG3 localization and retention at cell-cell junctions. Interacts with CDH1; the interaction is required for CDH1 localization to developing adherens junctions. Interacts with RAC1; the interaction is required for DSG3 translocation to cell-cell junctions, organization of cortical F-actin bundles and actin anchoring at cell-cell junctions. Interacts with DSC3; the interaction may limit the interaction of DSC3 with p38MAPK family members and therefore repress p38MAPK signaling activation. As to expression, expressed throughout the basal and spinous layer of the epidermis with weak expression in the granular layer (at protein level). Expressed in skin and mucosa (at protein level). Expressed in the basal layer of the outer root sheath of the telogen hair club, specifically at the cell membrane between the apex of the cells and the surrounding hair club (at protein level). Expression is less abundant between the lateral margins of the outer root sheath basal cells (at protein level). Also expressed in the tongue, tonsil and esophagus.

It is found in the cell membrane. It localises to the cell junction. The protein localises to the desmosome. The protein resides in the cytoplasm. Its subcellular location is the tight junction. Functionally, a component of desmosome cell-cell junctions which are required for positive regulation of cellular adhesion. Required for adherens and desmosome junction assembly in response to mechanical force in keratinocytes. Required for desmosome-mediated cell-cell adhesion of cells surrounding the telogen hair club and the basal layer of the outer root sheath epithelium, consequently is essential for the anchoring of telogen hairs in the hair follicle. Required for the maintenance of the epithelial barrier via promoting desmosome-mediated intercellular attachment of suprabasal epithelium to basal cells. May play a role in the protein stability of the desmosome plaque components DSP, JUP, PKP1, PKP2 and PKP3. Required for YAP1 localization at the plasma membrane in keratinocytes in response to mechanical strain, via the formation of an interaction complex composed of DSG3, PKP1 and YWHAG. May also be involved in the positive regulation of YAP1 target gene transcription and as a result cell proliferation. Positively regulates cellular contractility and cell junction formation via organization of cortical F-actin bundles and anchoring of actin to tight junctions, in conjunction with RAC1. The cytoplasmic pool of DSG3 is required for the localization of CDH1 and CTNNB1 at developing adherens junctions, potentially via modulation of SRC activity. Inhibits keratinocyte migration via suppression of p38MAPK signaling, may therefore play a role in moderating wound healing. The polypeptide is Desmoglein-3 (Homo sapiens (Human)).